We begin with the raw amino-acid sequence, 923 residues long: Smoothelin (923 aa).

Ala-2 carries the post-translational modification N-acetylalanine. Residues 24–89 (LAERRRIRSA…ARLAGRLESM (66 aa)) adopt a coiled-coil conformation. Residues 134–456 (SRLPSSGPRE…GTGEPGGSMK (323 aa)) are disordered. Composition is skewed to low complexity over residues 164–179 (QEQQ…TPED) and 192–205 (RAPP…PASP). A compositionally biased stretch (pro residues) spans 237–252 (LPHPSEAPSPEPPMSP). 2 stretches are compositionally biased toward polar residues: residues 272-285 (PSDT…FSNT) and 293-314 (TKSC…NREP). Ser-299, Ser-301, Ser-304, and Ser-340 each carry phosphoserine. Phosphothreonine is present on residues Thr-359 and Thr-372. Residues 366 to 389 (PSLISTTPASSSSSNSSSPSPSDT) show a composition bias toward low complexity. A phosphoserine mark is found at Ser-501, Ser-521, and Ser-574. Disordered stretches follow at residues 542–578 (KMEP…PLSA) and 615–772 (QRKR…ARKA). Positions 601–628 (EERKLIRAALRELRQRKRDQRDKERERR) form a coiled coil. The segment covering 615–638 (QRKRDQRDKERERRLREARARPGE) has biased composition (basic and acidic residues). At Ser-641 the chain carries Phosphoserine. A compositionally biased stretch (polar residues) spans 674–687 (NDGTQTARTTTVES). A compositionally biased stretch (low complexity) spans 697–721 (SSSSSTTTTTVQTKSFSSSSSSSSS). Position 735 is a phosphoserine (Ser-735). Positions 744 to 756 (LERRQAEKKKELM) are enriched in basic and acidic residues. Ser-798 bears the Phosphoserine mark. The 108-residue stretch at 805-912 (NSIKQMLLDW…YVQSLYNHLR (108 aa)) folds into the Calponin-homology (CH) domain.

The protein belongs to the smoothelin family.

Its subcellular location is the cytoplasm. It localises to the cytoskeleton. Its function is as follows. Structural protein of the cytoskeleton. The chain is Smoothelin (Smtn) from Mus musculus (Mouse).